The following is a 363-amino-acid chain: NAD(P)H-quinone oxidoreductase subunit 1, chloroplastic (363 aa).

7 consecutive transmembrane segments (helical) span residues 26 to 46 (IIWILIPIFTLVLGITIGVLV), 98 to 118 (FSIGPSIAVISILLSYSVIPF), 127 to 147 (LTIGVFLWIAISSIAPIGLLM), 246 to 266 (TEYSGIKFGLFYVASYLNLLV), 268 to 288 (SLFVTVLYLGGWNLSIPYIFV), 300 to 320 (VFGPVIGIFITLAKTYLFLFI), and 336 to 356 (LLNLGWKFLLPISLGNLLLTT).

The protein belongs to the complex I subunit 1 family. In terms of assembly, NDH is composed of at least 16 different subunits, 5 of which are encoded in the nucleus.

It localises to the plastid. The protein resides in the chloroplast thylakoid membrane. The enzyme catalyses a plastoquinone + NADH + (n+1) H(+)(in) = a plastoquinol + NAD(+) + n H(+)(out). It catalyses the reaction a plastoquinone + NADPH + (n+1) H(+)(in) = a plastoquinol + NADP(+) + n H(+)(out). Its function is as follows. NDH shuttles electrons from NAD(P)H:plastoquinone, via FMN and iron-sulfur (Fe-S) centers, to quinones in the photosynthetic chain and possibly in a chloroplast respiratory chain. The immediate electron acceptor for the enzyme in this species is believed to be plastoquinone. Couples the redox reaction to proton translocation, and thus conserves the redox energy in a proton gradient. The sequence is that of NAD(P)H-quinone oxidoreductase subunit 1, chloroplastic from Coffea arabica (Arabian coffee).